A 109-amino-acid polypeptide reads, in one-letter code: MRGLLPFLFLLSFFLSPIQAQPEGREEELEETWSEDRDQAPPRVVEESEVVGAENEAGLAAGRSYPWIILKKCRERGGQCHSGVCSWNEKFIGFCSFARPCCRKRRAVP.

An N-terminal signal peptide occupies residues Met-1–Ala-20. The segment at Gln-21–Val-44 is disordered. Residues Gln-21–Leu-70 constitute a propeptide that is removed on maturation. The segment covering Ser-34–Val-44 has biased composition (basic and acidic residues). 3 disulfides stabilise this stretch: Cys-73–Cys-101, Cys-80–Cys-95, and Cys-85–Cys-102. A propeptide spanning residues Ala-107–Pro-109 is cleaved from the precursor.

This sequence belongs to the beta-defensin family. As to expression, highly expressed in kidney, and expressed at lower levels in testis.

The protein resides in the secreted. Has antimicrobial activity. In Ornithorhynchus anatinus (Duckbill platypus), this protein is Defensin-B5.